Reading from the N-terminus, the 307-residue chain is MNDSVLPLGHLMVFDALYRHGSAGKAAHALSMPQPTLSRWLAQLRTHFDDPLFVRTRSGMEPTPLAARAAPHIAEMIAIYRQHVRSELRFDPGTSNRNFRIAASDFGQALMLPRLYATLEETAPQVRVTGVNLRHGPLVEELESGSIDIAFGGFPTLSAGIKTQTLFREEYVCVMRQSHPALTHGLDLEAFRQCRHIIVTAHEFNHVHEQVEARLLELLPPESIRFTTENFLVSAVIAEETDVILTIPSRLARWFANRGGLTIFPVPIELPSIEVKQYWHERYDKDPGNIWLRRVIAKIGFQNPPAE.

The region spanning 6–63 (LPLGHLMVFDALYRHGSAGKAAHALSMPQPTLSRWLAQLRTHFDDPLFVRTRSGMEPT) is the HTH lysR-type domain. Positions 23–42 (AGKAAHALSMPQPTLSRWLA) form a DNA-binding region, H-T-H motif.

Belongs to the LysR transcriptional regulatory family.

In terms of biological role, transcriptional activator for the pcpA, pcpB and pcpE genes for pentachlorophenol (PCP) degradation. Essential for PCP degradation. This is PCP degradation transcriptional activation protein (pcpR) from Sphingobium chlorophenolicum.